We begin with the raw amino-acid sequence, 523 residues long: 2-isopropylmalate synthase (523 aa).

In terms of domain architecture, Pyruvate carboxyltransferase spans 5 to 267; the sequence is VIIFDTTLRD…HTNINHHEIW (263 aa). Residues D14, H202, H204, and N238 each coordinate Mn(2+). The segment at 392 to 523 is regulatory domain; it reads RLDYFSVQSG…QNKENNKETV (132 aa).

This sequence belongs to the alpha-IPM synthase/homocitrate synthase family. LeuA type 1 subfamily. Homodimer. Mn(2+) serves as cofactor.

Its subcellular location is the cytoplasm. The enzyme catalyses 3-methyl-2-oxobutanoate + acetyl-CoA + H2O = (2S)-2-isopropylmalate + CoA + H(+). It functions in the pathway amino-acid biosynthesis; L-leucine biosynthesis; L-leucine from 3-methyl-2-oxobutanoate: step 1/4. Its function is as follows. Catalyzes the condensation of the acetyl group of acetyl-CoA with 3-methyl-2-oxobutanoate (2-ketoisovalerate) to form 3-carboxy-3-hydroxy-4-methylpentanoate (2-isopropylmalate). The polypeptide is 2-isopropylmalate synthase (Salmonella paratyphi A (strain ATCC 9150 / SARB42)).